Here is a 273-residue protein sequence, read N- to C-terminus: 5-deoxy-glucuronate isomerase (273 aa).

It belongs to the isomerase IolB family.

It carries out the reaction 5-deoxy-D-glucuronate = 5-dehydro-2-deoxy-D-gluconate. The protein operates within polyol metabolism; myo-inositol degradation into acetyl-CoA; acetyl-CoA from myo-inositol: step 4/7. Its function is as follows. Involved in the isomerization of 5-deoxy-glucuronate (5DG) to 5-dehydro-2-deoxy-D-gluconate (DKG or 2-deoxy-5-keto-D-gluconate). This Listeria innocua serovar 6a (strain ATCC BAA-680 / CLIP 11262) protein is 5-deoxy-glucuronate isomerase.